We begin with the raw amino-acid sequence, 92 residues long: MHESNTLYGGPMTKLRQAINQVLAAVLLAGIGFYRRFISPMIGPRCRFTPTCSAYGLEAIQKHGPWKGGWLTVKRLLRCHPFTPCGCDPVPD.

The protein belongs to the UPF0161 family.

It localises to the cell inner membrane. Functionally, could be involved in insertion of integral membrane proteins into the membrane. The chain is Putative membrane protein insertion efficiency factor from Synechococcus sp. (strain CC9605).